Consider the following 1058-residue polypeptide: Carbamoyl phosphate synthase large chain (1058 aa).

Positions 1-401 (MPKRTDIQKI…SLLKACRSLE (401 aa)) are carboxyphosphate synthetic domain. Residues Arg129, Arg169, Gly175, Gly176, Arg208, Ile210, Glu215, Gly241, Ile242, His243, Gln284, and Glu298 each contribute to the ATP site. Residues 133–327 (KQLMEELEQP…IAKLAAKIAV (195 aa)) form the ATP-grasp 1 domain. Mg(2+)-binding residues include Gln284, Glu298, and Asn300. Mn(2+) is bound by residues Gln284, Glu298, and Asn300. Residues 402–546 (IGVHHNEIPE…YSTYGWENES (145 aa)) form an oligomerization domain region. A carbamoyl phosphate synthetic domain region spans residues 547–929 (IRSDKESVLV…ALYKAFEASY (383 aa)). In terms of domain architecture, ATP-grasp 2 spans 671–861 (EQALKELDIP…MAQVATKLIL (191 aa)). ATP is bound by residues Arg707, Ser746, Ile748, Glu752, Gly777, Val778, His779, Ser780, Gln820, and Glu832. Residues Gln820, Glu832, and Asn834 each coordinate Mg(2+). Gln820, Glu832, and Asn834 together coordinate Mn(2+). Residues 930–1058 (LHLPTFGNVV…ESRSFVTEAI (129 aa)) form the MGS-like domain. Residues 930–1058 (LHLPTFGNVV…ESRSFVTEAI (129 aa)) form an allosteric domain region.

It belongs to the CarB family. In terms of assembly, composed of two chains; the small (or glutamine) chain promotes the hydrolysis of glutamine to ammonia, which is used by the large (or ammonia) chain to synthesize carbamoyl phosphate. Tetramer of heterodimers (alpha,beta)4. Mg(2+) serves as cofactor. The cofactor is Mn(2+).

It carries out the reaction hydrogencarbonate + L-glutamine + 2 ATP + H2O = carbamoyl phosphate + L-glutamate + 2 ADP + phosphate + 2 H(+). It catalyses the reaction hydrogencarbonate + NH4(+) + 2 ATP = carbamoyl phosphate + 2 ADP + phosphate + 2 H(+). It functions in the pathway amino-acid biosynthesis; L-arginine biosynthesis; carbamoyl phosphate from bicarbonate: step 1/1. The protein operates within pyrimidine metabolism; UMP biosynthesis via de novo pathway; (S)-dihydroorotate from bicarbonate: step 1/3. Large subunit of the glutamine-dependent carbamoyl phosphate synthetase (CPSase). CPSase catalyzes the formation of carbamoyl phosphate from the ammonia moiety of glutamine, carbonate, and phosphate donated by ATP, constituting the first step of 2 biosynthetic pathways, one leading to arginine and/or urea and the other to pyrimidine nucleotides. The large subunit (synthetase) binds the substrates ammonia (free or transferred from glutamine from the small subunit), hydrogencarbonate and ATP and carries out an ATP-coupled ligase reaction, activating hydrogencarbonate by forming carboxy phosphate which reacts with ammonia to form carbamoyl phosphate. This chain is Carbamoyl phosphate synthase large chain, found in Streptococcus pneumoniae (strain JJA).